The chain runs to 208 residues: Uracil phosphoribosyltransferase (208 aa).

5-phospho-alpha-D-ribose 1-diphosphate is bound by residues R78, R103, and 130-138; that span reads DPMLATGGT. Residues I193 and 198 to 200 contribute to the uracil site; that span reads GDA. 5-phospho-alpha-D-ribose 1-diphosphate is bound at residue D199.

It belongs to the UPRTase family. Mg(2+) is required as a cofactor.

The enzyme catalyses UMP + diphosphate = 5-phospho-alpha-D-ribose 1-diphosphate + uracil. It participates in pyrimidine metabolism; UMP biosynthesis via salvage pathway; UMP from uracil: step 1/1. With respect to regulation, allosterically activated by GTP. Functionally, catalyzes the conversion of uracil and 5-phospho-alpha-D-ribose 1-diphosphate (PRPP) to UMP and diphosphate. The protein is Uracil phosphoribosyltransferase of Desulforapulum autotrophicum (strain ATCC 43914 / DSM 3382 / VKM B-1955 / HRM2) (Desulfobacterium autotrophicum).